Here is a 454-residue protein sequence, read N- to C-terminus: Bifunctional protein GlmU (454 aa).

A pyrophosphorylase region spans residues 1–232 (MTDRTCLSIV…VDNVIGINNR (232 aa)). UDP-N-acetyl-alpha-D-glucosamine-binding positions include 11–14 (LAAG), K25, Q78, and 83–84 (GT). Residue D108 coordinates Mg(2+). G144, E158, N173, and N230 together coordinate UDP-N-acetyl-alpha-D-glucosamine. Mg(2+) is bound at residue N230. The tract at residues 233–253 (AELAEAETIWQNRKRRELMLS) is linker. The N-acetyltransferase stretch occupies residues 254–454 (GVTLIAPETV…AIKAAKSVSK (201 aa)). The UDP-N-acetyl-alpha-D-glucosamine site is built by R319 and K337. The active-site Proton acceptor is the H349. Positions 352 and 363 each coordinate UDP-N-acetyl-alpha-D-glucosamine. Residues A366, 372-373 (NY), S391, S409, and R426 contribute to the acetyl-CoA site.

It in the N-terminal section; belongs to the N-acetylglucosamine-1-phosphate uridyltransferase family. This sequence in the C-terminal section; belongs to the transferase hexapeptide repeat family. In terms of assembly, homotrimer. Mg(2+) is required as a cofactor.

Its subcellular location is the cytoplasm. It catalyses the reaction alpha-D-glucosamine 1-phosphate + acetyl-CoA = N-acetyl-alpha-D-glucosamine 1-phosphate + CoA + H(+). The enzyme catalyses N-acetyl-alpha-D-glucosamine 1-phosphate + UTP + H(+) = UDP-N-acetyl-alpha-D-glucosamine + diphosphate. It participates in nucleotide-sugar biosynthesis; UDP-N-acetyl-alpha-D-glucosamine biosynthesis; N-acetyl-alpha-D-glucosamine 1-phosphate from alpha-D-glucosamine 6-phosphate (route II): step 2/2. Its pathway is nucleotide-sugar biosynthesis; UDP-N-acetyl-alpha-D-glucosamine biosynthesis; UDP-N-acetyl-alpha-D-glucosamine from N-acetyl-alpha-D-glucosamine 1-phosphate: step 1/1. It functions in the pathway bacterial outer membrane biogenesis; LPS lipid A biosynthesis. Functionally, catalyzes the last two sequential reactions in the de novo biosynthetic pathway for UDP-N-acetylglucosamine (UDP-GlcNAc). The C-terminal domain catalyzes the transfer of acetyl group from acetyl coenzyme A to glucosamine-1-phosphate (GlcN-1-P) to produce N-acetylglucosamine-1-phosphate (GlcNAc-1-P), which is converted into UDP-GlcNAc by the transfer of uridine 5-monophosphate (from uridine 5-triphosphate), a reaction catalyzed by the N-terminal domain. This is Bifunctional protein GlmU from Brucella canis (strain ATCC 23365 / NCTC 10854 / RM-666).